A 134-amino-acid polypeptide reads, in one-letter code: C-C motif chemokine 21 (134 aa).

The signal sequence occupies residues 1-23; it reads MAQSLALSLLILVLAFGIPRTQG. Intrachain disulfides connect C31–C57, C32–C75, and C103–C122. Positions 88–134 are disordered; sequence QHLDKTPSPQKPAQGCRKDRGASKTGKKGKGSKGCKRTERSQTPKGP. The interval 98 to 134 is C-terminal basic extension; that stretch reads KPAQGCRKDRGASKTGKKGKGSKGCKRTERSQTPKGP. Basic residues predominate over residues 112–122; the sequence is TGKKGKGSKGC. Residues 123–134 are compositionally biased toward basic and acidic residues; that stretch reads KRTERSQTPKGP.

This sequence belongs to the intercrine beta (chemokine CC) family. In terms of assembly, monomer. Binds to CCR7. Interacts with PDPN; relocalizes PDPN to the basolateral membrane. Interacts with TNFAIP6 (via Link domain). Interacts with GPR174. Highly expressed in high endothelial venules of lymph nodes, spleen and appendix. Intermediate levels found in small intestine, thyroid gland and trachea. Low level expression in thymus, bone marrow, liver, and pancreas. Also found in tonsil, fetal heart and fetal spleen.

The protein resides in the secreted. Its function is as follows. Inhibits hemopoiesis and stimulates chemotaxis. Chemotactic in vitro for thymocytes and activated T-cells, but not for B-cells, macrophages, or neutrophils. Shows preferential activity towards naive T-cells. May play a role in mediating homing of lymphocytes to secondary lymphoid organs. Binds to atypical chemokine receptor ACKR4 and mediates the recruitment of beta-arrestin (ARRB1/2) to ACKR4. In Homo sapiens (Human), this protein is C-C motif chemokine 21 (CCL21).